The sequence spans 257 residues: Probable amino-acid ABC transporter ATP-binding protein y4tH (257 aa).

The ABC transporter domain maps to 6-251 (IVFDKVKKAY…PKEERTREFL (246 aa)). 38 to 45 (GPSGSGKS) serves as a coordination point for ATP.

This sequence belongs to the ABC transporter superfamily.

The protein localises to the cell inner membrane. Its function is as follows. Probably part of a binding-protein-dependent transport system y4tEFGH for an amino acid. Probably responsible for energy coupling to the transport system. The protein is Probable amino-acid ABC transporter ATP-binding protein y4tH of Sinorhizobium fredii (strain NBRC 101917 / NGR234).